The sequence spans 673 residues: UvrABC system protein B (673 aa).

The Helicase ATP-binding domain maps to 30 to 417 (NSILLGNKYQ…SSVVVDQIIR (388 aa)). 43–50 (GVTGSGKT) is an ATP binding site. The Beta-hairpin signature appears at 96-119 (YYDYYQPESYVPSKDLFIEKEATI). Residues 434 to 600 (QMEDLYSEIQ…TIVKKIQNIL (167 aa)) enclose the Helicase C-terminal domain. The 36-residue stretch at 627 to 662 (KKLIDKLKFDLEEAVNDERFEDAIVLRDKIKELSSK) folds into the UVR domain.

It belongs to the UvrB family. As to quaternary structure, forms a heterotetramer with UvrA during the search for lesions. Interacts with UvrC in an incision complex.

The protein localises to the cytoplasm. The UvrABC repair system catalyzes the recognition and processing of DNA lesions. A damage recognition complex composed of 2 UvrA and 2 UvrB subunits scans DNA for abnormalities. Upon binding of the UvrA(2)B(2) complex to a putative damaged site, the DNA wraps around one UvrB monomer. DNA wrap is dependent on ATP binding by UvrB and probably causes local melting of the DNA helix, facilitating insertion of UvrB beta-hairpin between the DNA strands. Then UvrB probes one DNA strand for the presence of a lesion. If a lesion is found the UvrA subunits dissociate and the UvrB-DNA preincision complex is formed. This complex is subsequently bound by UvrC and the second UvrB is released. If no lesion is found, the DNA wraps around the other UvrB subunit that will check the other stand for damage. In Borreliella burgdorferi (strain ATCC 35210 / DSM 4680 / CIP 102532 / B31) (Borrelia burgdorferi), this protein is UvrABC system protein B.